The sequence spans 183 residues: Copper transporter 4 (183 aa).

Residues 1–21 (MAMPMPMPPPGPGGDAPPAPT) are disordered. Helical transmembrane passes span 56-76 (VGMY…AEAL) and 115-135 (LAYL…LAAV).

It belongs to the copper transporter (Ctr) (TC 1.A.56) family. SLC31A subfamily.

The protein resides in the membrane. Functionally, involved in the transport of copper. The polypeptide is Copper transporter 4 (COPT4) (Oryza sativa subsp. japonica (Rice)).